Here is a 396-residue protein sequence, read N- to C-terminus: L-lactate dehydrogenase (396 aa).

Residues 1-380 (MIISAASDYR…SGDSLVQELG (380 aa)) enclose the FMN hydroxy acid dehydrogenase domain. Tyr24 contacts substrate. 2 residues coordinate FMN: Ser106 and Gln127. Tyr129 is a binding site for substrate. Thr155 is an FMN binding site. Residue Arg164 participates in substrate binding. Residue Lys251 coordinates FMN. His275 serves as the catalytic Proton acceptor. Arg278 serves as a coordination point for substrate. Residue 306–330 (DSGIRNGLDVVRMIALGADTVLLGR) participates in FMN binding.

Belongs to the FMN-dependent alpha-hydroxy acid dehydrogenase family. FMN is required as a cofactor.

Its subcellular location is the cell inner membrane. It carries out the reaction (S)-lactate + A = pyruvate + AH2. Catalyzes the conversion of L-lactate to pyruvate. Is coupled to the respiratory chain. In Salmonella schwarzengrund (strain CVM19633), this protein is L-lactate dehydrogenase.